Reading from the N-terminus, the 489-residue chain is Virion host shutoff protein (489 aa).

Disordered stretches follow at residues 110–135 (EEAS…AFSN), 142–161 (SLAS…PSAA), 285–319 (RSQT…ETRV), and 332–364 (GYED…LTPP). The segment covering 124 to 134 (ITDSRPSSAFS) has biased composition (polar residues).

Belongs to the herpesviridae VHS protein family. Interacts with human EIF4H, EIF4A1 and EIF4A2; interaction with eIF4AI and EIF4A2 presumably allows Vhs protein to associate with the eIF4F cap-binding complex.

Its subcellular location is the virion. In terms of biological role, minor structural protein that acts as an endoribonuclease during lytic infection. Degrades host mRNAs in the cytoplasm by cutting them at preferred sites, including some in regions of translation initiation. Together with inhibition of host splicing by ICP27, contributes to an overall decrease in host protein synthesis. Also, after the onset of viral transcription, accelerates the turnover of viral mRNA, thereby facilitating the sequential expression of different classes of viral genes. Binds translation initiation factors eIF4H, eIF4AI, and eIF4AII, thereby may interact directly with the translation initiation complex and thus digest specifically mRNAs. Also impedes antigen presentation by major histocompatibility complex class I and class II molecules, inhibits secretion of cytokines that would otherwise recruit lymphocytes and neutrophils cells to the site of infection and blocks the activation of dendritic cells. Plays a role in the inhibition of interferon-beta activation by the cGAS/STING pathway. Mechanistically, down-regulates the expression of host cGAS/MB21D1. Also decreases the accumulation of other interferon-induced mRNAs such as host IFIT3 or CH25H to subvert their antiviral activity. This chain is Virion host shutoff protein (UL41), found in Human herpesvirus 1 (strain 17) (HHV-1).